A 433-amino-acid polypeptide reads, in one-letter code: ATP-dependent protease ATPase subunit HslU (433 aa).

ATP-binding positions include Val-18, 60–65 (GVGKTE), Asp-246, Glu-311, and Arg-383.

The protein belongs to the ClpX chaperone family. HslU subfamily. A double ring-shaped homohexamer of HslV is capped on each side by a ring-shaped HslU homohexamer. The assembly of the HslU/HslV complex is dependent on binding of ATP.

It localises to the cytoplasm. Its function is as follows. ATPase subunit of a proteasome-like degradation complex; this subunit has chaperone activity. The binding of ATP and its subsequent hydrolysis by HslU are essential for unfolding of protein substrates subsequently hydrolyzed by HslV. HslU recognizes the N-terminal part of its protein substrates and unfolds these before they are guided to HslV for hydrolysis. In Rhodopseudomonas palustris (strain TIE-1), this protein is ATP-dependent protease ATPase subunit HslU.